A 509-amino-acid chain; its full sequence is ATP synthase subunit beta (509 aa).

An ATP-binding site is contributed by 167–174 (GGAGVGKT). Residues 476–509 (ESLGAKMEDTSGDGAPAQSDSKSDSKGDDADKDA) form a disordered region. The segment covering 496–509 (SKSDSKGDDADKDA) has biased composition (basic and acidic residues).

The protein belongs to the ATPase alpha/beta chains family. As to quaternary structure, F-type ATPases have 2 components, CF(1) - the catalytic core - and CF(0) - the membrane proton channel. CF(1) has five subunits: alpha(3), beta(3), gamma(1), delta(1), epsilon(1). CF(0) has three main subunits: a(1), b(2) and c(9-12). The alpha and beta chains form an alternating ring which encloses part of the gamma chain. CF(1) is attached to CF(0) by a central stalk formed by the gamma and epsilon chains, while a peripheral stalk is formed by the delta and b chains.

It is found in the cell membrane. It carries out the reaction ATP + H2O + 4 H(+)(in) = ADP + phosphate + 5 H(+)(out). Its function is as follows. Produces ATP from ADP in the presence of a proton gradient across the membrane. The catalytic sites are hosted primarily by the beta subunits. This Mycobacterium sp. (strain KMS) protein is ATP synthase subunit beta.